A 265-amino-acid polypeptide reads, in one-letter code: Type III pantothenate kinase (265 aa).

Residue 6 to 13 participates in ATP binding; sequence DVGNTNIV. Substrate is bound by residues Y100 and 107 to 110; that span reads GADR. Catalysis depends on D109, which acts as the Proton acceptor. D129 is a K(+) binding site. T132 contributes to the ATP binding site. T184 is a binding site for substrate.

The protein belongs to the type III pantothenate kinase family. Homodimer. It depends on NH4(+) as a cofactor. The cofactor is K(+).

Its subcellular location is the cytoplasm. The catalysed reaction is (R)-pantothenate + ATP = (R)-4'-phosphopantothenate + ADP + H(+). It participates in cofactor biosynthesis; coenzyme A biosynthesis; CoA from (R)-pantothenate: step 1/5. Its function is as follows. Catalyzes the phosphorylation of pantothenate (Pan), the first step in CoA biosynthesis. In Alkaliphilus oremlandii (strain OhILAs) (Clostridium oremlandii (strain OhILAs)), this protein is Type III pantothenate kinase.